The chain runs to 448 residues: MVMAKTLHQEVYHTLSETFDFANNDQRLWWHSTAPMFEKMLQTANYSIDAQYRHLGIYKSHVIPFLGVYPTRSGERWLSILTRYGTPFELSLNCSDSVVRYTYEPINAATGSHLDPFNTFAIWEALKKHIESQPGIDLEWFSYFKQELTLDANESTYLHSQNLVKEQIKTQNKLALDLKGDKFVLKTYIYPELKSVATGKSVQELVFGSVRKLAQKHKSIRPAFEMLEDYVQSRNKFSTTDDSHNTLLSSRLLSCDLISPTKSRVKIYLLERMVSLPAMEDLWTLGGRREDQSTIEGLEMIRELWGLLNMSPGLRAYPEPYLPLGAIPNEQLPSMANYTLHHNDPIPEPQVYFTVFGMNDMEVTNALTTFFMRHEWSDMASKYKACLRESFPHHDYEALNYIHSYISFSYRKNKPYLSVYLHSFETGKWPVFPEGLIAFDACRRDLTC.

L-tryptophan-binding positions include 80–81 (IL) and Glu-89. Residues Arg-100, Lys-186, and Tyr-188 each contribute to the substrate site. 2 residues coordinate L-tryptophan: Tyr-190 and Arg-251. Positions 264, 266, 268, 350, 352, 416, and 420 each coordinate substrate.

This sequence belongs to the tryptophan dimethylallyltransferase family. Homodimer.

The enzyme catalyses L-tryptophan + dimethylallyl diphosphate = 4-(3-methylbut-2-enyl)-L-tryptophan + diphosphate. The protein operates within alkaloid biosynthesis; ergot alkaloid biosynthesis. Its function is as follows. Catalyzes the first step of ergot alkaloid biosynthesis. Ergot alkaloids, which are produced by endophyte fungi, can enhance plant host fitness, but also cause livestock toxicosis to host plants. This is Tryptophan dimethylallyltransferase 1 (dmaW1) from Epichloe coenophiala (Tall fescue endophyte fungus).